The chain runs to 352 residues: Dof zinc finger protein DOF1.8 (352 aa).

The interval 24–46 (LKQQSNPPSPATPVERKARPEKD) is disordered. Positions 37-46 (VERKARPEKD) are enriched in basic and acidic residues. The segment at 49–103 (LNCPRCNSLNTKFCYYNNYSLTQPRYFCKDCRRYWTAGGSLRNIPVGGGVRKNKR) adopts a Dof-type zinc-finger fold. Zn(2+) is bound by residues C51, C54, C76, and C79. Disordered stretches follow at residues 93–136 (PVGG…PLPH) and 265–334 (GGDP…VGFW). Residues 104–129 (SSSNSSSSSPSSSSSSKKPLFANNNT) show a composition bias toward low complexity. A compositionally biased stretch (basic and acidic residues) spans 310-323 (ENNDEHSDHEHEKE).

The protein resides in the nucleus. Functionally, transcription factor that binds specifically to a 5'-AA[AG]G-3' consensus core sequence. The polypeptide is Dof zinc finger protein DOF1.8 (DOF1.8) (Arabidopsis thaliana (Mouse-ear cress)).